Consider the following 118-residue polypeptide: Large ribosomal subunit protein bL20 (118 aa).

The protein belongs to the bacterial ribosomal protein bL20 family.

Binds directly to 23S ribosomal RNA and is necessary for the in vitro assembly process of the 50S ribosomal subunit. It is not involved in the protein synthesizing functions of that subunit. This is Large ribosomal subunit protein bL20 (rplT) from Aquifex aeolicus (strain VF5).